The primary structure comprises 491 residues: N-succinylglutamate 5-semialdehyde dehydrogenase (491 aa).

Position 225 to 230 (225 to 230) interacts with NAD(+); that stretch reads GSSTVG. Catalysis depends on residues E248 and C282.

It belongs to the aldehyde dehydrogenase family. AstD subfamily.

The enzyme catalyses N-succinyl-L-glutamate 5-semialdehyde + NAD(+) + H2O = N-succinyl-L-glutamate + NADH + 2 H(+). It participates in amino-acid degradation; L-arginine degradation via AST pathway; L-glutamate and succinate from L-arginine: step 4/5. Catalyzes the NAD-dependent reduction of succinylglutamate semialdehyde into succinylglutamate. This Marinobacter nauticus (strain ATCC 700491 / DSM 11845 / VT8) (Marinobacter aquaeolei) protein is N-succinylglutamate 5-semialdehyde dehydrogenase.